The primary structure comprises 425 residues: Serine--tRNA ligase (425 aa).

231–233 (TAE) provides a ligand contact to L-serine. 262–264 (RSE) provides a ligand contact to ATP. Glu-285 provides a ligand contact to L-serine. 349–352 (EISS) serves as a coordination point for ATP. Ser-385 contributes to the L-serine binding site.

Belongs to the class-II aminoacyl-tRNA synthetase family. Type-1 seryl-tRNA synthetase subfamily. In terms of assembly, homodimer. The tRNA molecule binds across the dimer.

Its subcellular location is the cytoplasm. The enzyme catalyses tRNA(Ser) + L-serine + ATP = L-seryl-tRNA(Ser) + AMP + diphosphate + H(+). It carries out the reaction tRNA(Sec) + L-serine + ATP = L-seryl-tRNA(Sec) + AMP + diphosphate + H(+). Its pathway is aminoacyl-tRNA biosynthesis; selenocysteinyl-tRNA(Sec) biosynthesis; L-seryl-tRNA(Sec) from L-serine and tRNA(Sec): step 1/1. Catalyzes the attachment of serine to tRNA(Ser). Is also able to aminoacylate tRNA(Sec) with serine, to form the misacylated tRNA L-seryl-tRNA(Sec), which will be further converted into selenocysteinyl-tRNA(Sec). The chain is Serine--tRNA ligase from Bartonella quintana (strain Toulouse) (Rochalimaea quintana).